Here is a 109-residue protein sequence, read N- to C-terminus: Nucleoid-associated protein HI_0442 (109 aa).

Belongs to the YbaB/EbfC family. In terms of assembly, homodimer.

It localises to the cytoplasm. Its subcellular location is the nucleoid. In terms of biological role, binds to DNA and alters its conformation. May be involved in regulation of gene expression, nucleoid organization and DNA protection. This is Nucleoid-associated protein HI_0442 from Haemophilus influenzae (strain ATCC 51907 / DSM 11121 / KW20 / Rd).